The primary structure comprises 543 residues: Chaperonin GroEL 2 (543 aa).

ATP-binding positions include 29 to 32, 86 to 90, G413, 479 to 481, and D495; these read TLGP, DGTTT, and NAA.

Belongs to the chaperonin (HSP60) family. Forms a cylinder of 14 subunits composed of two heptameric rings stacked back-to-back. Interacts with the co-chaperonin GroES.

It localises to the cytoplasm. It catalyses the reaction ATP + H2O + a folded polypeptide = ADP + phosphate + an unfolded polypeptide.. Together with its co-chaperonin GroES, plays an essential role in assisting protein folding. The GroEL-GroES system forms a nano-cage that allows encapsulation of the non-native substrate proteins and provides a physical environment optimized to promote and accelerate protein folding. This Synechococcus sp. (strain CC9311) protein is Chaperonin GroEL 2.